The chain runs to 536 residues: Light-independent protochlorophyllide reductase subunit B (536 aa).

Asp36 is a [4Fe-4S] cluster binding site. The active-site Proton donor is the Asp274. Residue 409-410 (GL) participates in substrate binding. Residues 426–448 (DEAGPSHHGGKAVPASAPRADEA) are disordered.

It belongs to the ChlB/BchB/BchZ family. Protochlorophyllide reductase is composed of three subunits; BchL, BchN and BchB. Forms a heterotetramer of two BchB and two BchN subunits. Requires [4Fe-4S] cluster as cofactor.

The catalysed reaction is chlorophyllide a + oxidized 2[4Fe-4S]-[ferredoxin] + 2 ADP + 2 phosphate = protochlorophyllide a + reduced 2[4Fe-4S]-[ferredoxin] + 2 ATP + 2 H2O. Its pathway is porphyrin-containing compound metabolism; bacteriochlorophyll biosynthesis (light-independent). Functionally, component of the dark-operative protochlorophyllide reductase (DPOR) that uses Mg-ATP and reduced ferredoxin to reduce ring D of protochlorophyllide (Pchlide) to form chlorophyllide a (Chlide). This reaction is light-independent. The NB-protein (BchN-BchB) is the catalytic component of the complex. The protein is Light-independent protochlorophyllide reductase subunit B of Cereibacter sphaeroides (strain KD131 / KCTC 12085) (Rhodobacter sphaeroides).